The following is a 33-amino-acid chain: Cysteine-rich venom protein tripurin (33 aa).

This sequence belongs to the CRISP family. Contains 8 disulfide bonds. As to expression, expressed by the venom gland.

It localises to the secreted. Functionally, blocks contraction of smooth muscle elicited by high potassium-induced depolarization, but does not block caffeine-stimulated contraction. May target voltage-gated calcium channels on smooth muscle. The chain is Cysteine-rich venom protein tripurin from Trimeresurus purpureomaculatus (Mangrove pit viper).